A 566-amino-acid chain; its full sequence is DBIRD complex subunit ZNF326 (566 aa).

Disordered stretches follow at residues 19–81 and 145–180; these read HCGV…ESYD and RPGF…GRGT. Residues 59–73 are compositionally biased toward gly residues; it reads SHGGGGGGGGGGGNR. The span at 156–165 shows a compositional bias: low complexity; that stretch reads SYSSYSSFSS. The short motif at 240–263 is the Bipartite nuclear localization signal element; that stretch reads KRKMMPQPYNKPGGTFIKKPKMTK. The disordered stretch occupies residues 314–347; it reads FGDSKGEGKSEEEEKRRIEARREKQRRRREKNSE. A compositionally biased stretch (basic and acidic residues) spans 317-335; that stretch reads SKGEGKSEEEEKRRIEARR. 2 consecutive C2H2 AKAP95-type zinc fingers follow at residues 359–381 and 452–475; these read CSFC…SAAH and CSAC…SPDH. Positions 516–566 are disordered; that stretch reads PFEINDQAQEQQTEEEDKAEEPAEGEEEEEEEEEEETEEQTDFTLDHTEDN. The span at 527 to 556 shows a compositional bias: acidic residues; it reads QTEEEDKAEEPAEGEEEEEEEEEEETEEQT.

The protein belongs to the AKAP95 family. As to quaternary structure, component of the DBIRD complex.

The protein localises to the nucleus. Functionally, core component of the DBIRD complex, a multiprotein complex that acts at the interface between core mRNP particles and RNA polymerase II (RNAPII) and integrates transcript elongation with the regulation of alternative splicing. The protein is DBIRD complex subunit ZNF326 (ZNF326) of Gallus gallus (Chicken).